Reading from the N-terminus, the 615-residue chain is Isocitrate dehydrogenase kinase/phosphatase (615 aa).

Residues alanine 325–methionine 331 and lysine 346 each bind ATP. The active site involves aspartate 381.

It belongs to the AceK family.

The protein localises to the cytoplasm. The enzyme catalyses L-seryl-[isocitrate dehydrogenase] + ATP = O-phospho-L-seryl-[isocitrate dehydrogenase] + ADP + H(+). Bifunctional enzyme which can phosphorylate or dephosphorylate isocitrate dehydrogenase (IDH) on a specific serine residue. This is a regulatory mechanism which enables bacteria to bypass the Krebs cycle via the glyoxylate shunt in response to the source of carbon. When bacteria are grown on glucose, IDH is fully active and unphosphorylated, but when grown on acetate or ethanol, the activity of IDH declines drastically concomitant with its phosphorylation. This Albidiferax ferrireducens (strain ATCC BAA-621 / DSM 15236 / T118) (Rhodoferax ferrireducens) protein is Isocitrate dehydrogenase kinase/phosphatase.